The following is a 157-amino-acid chain: Endoribonuclease YbeY (157 aa).

3 residues coordinate Zn(2+): H123, H127, and H133.

The protein belongs to the endoribonuclease YbeY family. Requires Zn(2+) as cofactor.

The protein localises to the cytoplasm. In terms of biological role, single strand-specific metallo-endoribonuclease involved in late-stage 70S ribosome quality control and in maturation of the 3' terminus of the 16S rRNA. The chain is Endoribonuclease YbeY from Limosilactobacillus fermentum (strain NBRC 3956 / LMG 18251) (Lactobacillus fermentum).